We begin with the raw amino-acid sequence, 138 residues long: Protein SPMIP3 (138 aa).

The polypeptide is Protein SPMIP3 (SPMIP3) (Bos taurus (Bovine)).